Consider the following 251-residue polypeptide: Triosephosphate isomerase (251 aa).

9 to 11 (NWK) lines the substrate pocket. Catalysis depends on H95, which acts as the Electrophile. The Proton acceptor role is filled by E167. Substrate contacts are provided by residues G173, S213, and 234 to 235 (GG).

The protein belongs to the triosephosphate isomerase family. In terms of assembly, homodimer.

The protein localises to the cytoplasm. The enzyme catalyses D-glyceraldehyde 3-phosphate = dihydroxyacetone phosphate. The protein operates within carbohydrate biosynthesis; gluconeogenesis. It participates in carbohydrate degradation; glycolysis; D-glyceraldehyde 3-phosphate from glycerone phosphate: step 1/1. Involved in the gluconeogenesis. Catalyzes stereospecifically the conversion of dihydroxyacetone phosphate (DHAP) to D-glyceraldehyde-3-phosphate (G3P). This is Triosephosphate isomerase from Fusobacterium nucleatum subsp. nucleatum (strain ATCC 25586 / DSM 15643 / BCRC 10681 / CIP 101130 / JCM 8532 / KCTC 2640 / LMG 13131 / VPI 4355).